Here is a 51-residue protein sequence, read N- to C-terminus: MFKKGQKVIVDFTDEIGAVAKVDYRYNQIEVKYPDGTYQVVGFHKVRKVED.

The sequence is that of SPbeta prophage-derived uncharacterized protein YorQ (yorQ) from Bacillus subtilis (strain 168).